A 352-amino-acid chain; its full sequence is GTPase Obg (352 aa).

Residues 1 to 159 (MSFIDEAKVF…FPIFMQLKVL (159 aa)) enclose the Obg domain. The region spanning 160–327 (SDIGIIGMPN…VMLYEMLQKD (168 aa)) is the OBG-type G domain. GTP-binding positions include 166 to 173 (GMPNAGKS), 191 to 195 (FTTLE), 212 to 215 (DIPG), 279 to 282 (NKCD), and 308 to 310 (SLD). Residues Ser-173 and Thr-193 each coordinate Mg(2+).

The protein belongs to the TRAFAC class OBG-HflX-like GTPase superfamily. OBG GTPase family. As to quaternary structure, monomer. Mg(2+) is required as a cofactor.

The protein resides in the cytoplasm. In terms of biological role, an essential GTPase which binds GTP, GDP and possibly (p)ppGpp with moderate affinity, with high nucleotide exchange rates and a fairly low GTP hydrolysis rate. Plays a role in control of the cell cycle, stress response, ribosome biogenesis and in those bacteria that undergo differentiation, in morphogenesis control. The polypeptide is GTPase Obg (Anaplasma phagocytophilum (strain HZ)).